The primary structure comprises 263 residues: Isoprenyl transferase (263 aa).

The active site involves Asp-38. Asp-38 is a binding site for Mg(2+). Residues 39 to 42 (GNRR), His-55, and 83 to 85 (STD) contribute to the substrate site. Asn-86 functions as the Proton acceptor in the catalytic mechanism. Substrate contacts are provided by residues Phe-87, Arg-89, Arg-212, and 218–220 (RLS). Mg(2+) is bound at residue Glu-231.

It belongs to the UPP synthase family. As to quaternary structure, homodimer. Mg(2+) serves as cofactor.

Catalyzes the condensation of isopentenyl diphosphate (IPP) with allylic pyrophosphates generating different type of terpenoids. This is Isoprenyl transferase from Thermus thermophilus (strain ATCC BAA-163 / DSM 7039 / HB27).